Reading from the N-terminus, the 138-residue chain is Putative acyl-CoA thioesterase YneP (138 aa).

Asp-16 is a catalytic residue.

The protein belongs to the 4-hydroxybenzoyl-CoA thioesterase family.

Functionally, has acyl-CoA thioesterase activity. The polypeptide is Putative acyl-CoA thioesterase YneP (yneP) (Bacillus subtilis (strain 168)).